The primary structure comprises 434 residues: Serine protease HTRA2, mitochondrial (434 aa).

The disordered stretch occupies residues 34-65 (YSNNTANITTDSSSSSNNNSNRNNKNDNNNED). A compositionally biased stretch (low complexity) spans 35–60 (SNNTANITTDSSSSSNNNSNRNNKND). Residues 74 to 92 (LVRFFVPFSLGAVASSLVM) traverse the membrane as a helical segment. The IAP-binding motif lies at 85–88 (AVAS). The serine protease stretch occupies residues 151 to 314 (SNGSGFVIEQ…IPIDYVKVFL (164 aa)). Catalysis depends on charge relay system residues His-169, Asp-201, and Ser-278. The PDZ domain occupies 337–424 (MGITMLTLTP…NMIIMRGVKQ (88 aa)).

It belongs to the peptidase S1C family. As to quaternary structure, interacts with th/DIAP1 (via BIR 2 domain).

The protein resides in the mitochondrion intermembrane space. It localises to the mitochondrion membrane. The enzyme catalyses Cleavage of non-polar aliphatic amino-acids at the P1 position, with a preference for Val, Ile and Met. At the P2 and P3 positions, Arg is selected most strongly with a secondary preference for other hydrophilic residues.. In terms of biological role, serine protease that shows proteolytic activity against a non-specific substrate beta-casein. Promotes or induces cell death either by direct binding to and inhibition of BIRC proteins (also called inhibitor of apoptosis proteins, IAPs), leading to an increase in caspase activity, or by a BIRC inhibition-independent, caspase-independent and serine protease activity-dependent mechanism. Can antagonize antiapoptotic activity of th/Diap1 by directly inducing the degradation of th/Diap1. The polypeptide is Serine protease HTRA2, mitochondrial (Drosophila willistoni (Fruit fly)).